The following is a 165-amino-acid chain: 3-isopropylmalate dehydratase small subunit (165 aa).

The protein belongs to the LeuD family. LeuD type 2 subfamily. In terms of assembly, heterodimer of LeuC and LeuD.

The enzyme catalyses (2R,3S)-3-isopropylmalate = (2S)-2-isopropylmalate. The protein operates within amino-acid biosynthesis; L-leucine biosynthesis; L-leucine from 3-methyl-2-oxobutanoate: step 2/4. Functionally, catalyzes the isomerization between 2-isopropylmalate and 3-isopropylmalate, via the formation of 2-isopropylmaleate. This Saccharolobus islandicus (strain M.14.25 / Kamchatka #1) (Sulfolobus islandicus) protein is 3-isopropylmalate dehydratase small subunit.